The following is a 352-amino-acid chain: tRNA uridine(34) hydroxylase (352 aa).

The Rhodanese domain maps to 144–238 (SDPDVILIDT…YLEEVPASDS (95 aa)). The Cysteine persulfide intermediate role is filled by Cys-198.

Belongs to the TrhO family.

The enzyme catalyses uridine(34) in tRNA + AH2 + O2 = 5-hydroxyuridine(34) in tRNA + A + H2O. Catalyzes oxygen-dependent 5-hydroxyuridine (ho5U) modification at position 34 in tRNAs. This chain is tRNA uridine(34) hydroxylase, found in Psychrobacter cryohalolentis (strain ATCC BAA-1226 / DSM 17306 / VKM B-2378 / K5).